The sequence spans 511 residues: Maturase K (511 aa).

Belongs to the intron maturase 2 family. MatK subfamily.

The protein localises to the plastid. Its subcellular location is the chloroplast. Functionally, usually encoded in the trnK tRNA gene intron. Probably assists in splicing its own and other chloroplast group II introns. This chain is Maturase K, found in Brachypodium distachyon (Purple false brome).